Reading from the N-terminus, the 276-residue chain is Prohibitin 1 (276 aa).

The protein belongs to the prohibitin family.

Required for larval metabolism or for the progression of the larva into a pupa. This is Prohibitin 1 from Drosophila melanogaster (Fruit fly).